The sequence spans 1074 residues: DNA-directed RNA polymerase subunit beta (1074 aa).

This sequence belongs to the RNA polymerase beta chain family. In terms of assembly, in plastids the minimal PEP RNA polymerase catalytic core is composed of four subunits: alpha, beta, beta', and beta''. When a (nuclear-encoded) sigma factor is associated with the core the holoenzyme is formed, which can initiate transcription.

Its subcellular location is the plastid. The protein resides in the chloroplast. It carries out the reaction RNA(n) + a ribonucleoside 5'-triphosphate = RNA(n+1) + diphosphate. In terms of biological role, DNA-dependent RNA polymerase catalyzes the transcription of DNA into RNA using the four ribonucleoside triphosphates as substrates. The protein is DNA-directed RNA polymerase subunit beta of Chara vulgaris (Common stonewort).